We begin with the raw amino-acid sequence, 119 residues long: Large ribosomal subunit protein uL18 (119 aa).

The interval 1–20 (MSQIDKAARRQKIKARSRAT) is disordered. A compositionally biased stretch (basic residues) spans 9 to 19 (RRQKIKARSRA).

The protein belongs to the universal ribosomal protein uL18 family. In terms of assembly, part of the 50S ribosomal subunit; part of the 5S rRNA/L5/L18/L25 subcomplex. Contacts the 5S and 23S rRNAs.

In terms of biological role, this is one of the proteins that bind and probably mediate the attachment of the 5S RNA into the large ribosomal subunit, where it forms part of the central protuberance. This is Large ribosomal subunit protein uL18 from Chlorobaculum parvum (strain DSM 263 / NCIMB 8327) (Chlorobium vibrioforme subsp. thiosulfatophilum).